The following is a 205-amino-acid chain: Probable GTP-binding protein EngB (205 aa).

The 175-residue stretch at 27-201 (TGIEIAFAGR…AAKLDFWFSP (175 aa)) folds into the EngB-type G domain. GTP-binding positions include 35 to 42 (GRSNAGKS), 62 to 66 (GRTQL), 80 to 83 (DLPG), 147 to 150 (TKAD), and 180 to 182 (FSA). Residues serine 42 and threonine 64 each coordinate Mg(2+).

The protein belongs to the TRAFAC class TrmE-Era-EngA-EngB-Septin-like GTPase superfamily. EngB GTPase family. Mg(2+) is required as a cofactor.

Functionally, necessary for normal cell division and for the maintenance of normal septation. This Haemophilus influenzae (strain PittEE) protein is Probable GTP-binding protein EngB.